The chain runs to 397 residues: Acetate kinase 2 (397 aa).

Residue Asn8 coordinates Mg(2+). Lys15 provides a ligand contact to ATP. Arg89 is a substrate binding site. Asp146 serves as the catalytic Proton donor/acceptor. ATP contacts are provided by residues 206 to 210, 281 to 283, and 329 to 333; these read HLGNG, DFR, and GVGEN. Glu380 contributes to the Mg(2+) binding site.

The protein belongs to the acetokinase family. As to quaternary structure, homodimer. Requires Mg(2+) as cofactor. Mn(2+) is required as a cofactor.

It localises to the cytoplasm. It catalyses the reaction acetate + ATP = acetyl phosphate + ADP. Its pathway is metabolic intermediate biosynthesis; acetyl-CoA biosynthesis; acetyl-CoA from acetate: step 1/2. Its function is as follows. Catalyzes the formation of acetyl phosphate from acetate and ATP. Can also catalyze the reverse reaction. The polypeptide is Acetate kinase 2 (Listeria monocytogenes serovar 1/2a (strain ATCC BAA-679 / EGD-e)).